A 146-amino-acid polypeptide reads, in one-letter code: ATP synthase epsilon chain (146 aa).

Positions Gln-102–Arg-122 are disordered.

The protein belongs to the ATPase epsilon chain family. As to quaternary structure, F-type ATPases have 2 components, CF(1) - the catalytic core - and CF(0) - the membrane proton channel. CF(1) has five subunits: alpha(3), beta(3), gamma(1), delta(1), epsilon(1). CF(0) has three main subunits: a, b and c.

It localises to the cell membrane. In terms of biological role, produces ATP from ADP in the presence of a proton gradient across the membrane. The chain is ATP synthase epsilon chain from Lactobacillus gasseri (strain ATCC 33323 / DSM 20243 / BCRC 14619 / CIP 102991 / JCM 1131 / KCTC 3163 / NCIMB 11718 / NCTC 13722 / AM63).